A 240-amino-acid chain; its full sequence is Thiopurine S-methyltransferase (240 aa).

Residue 24-35 (WQDKWVTRHIAF) coordinates S-adenosyl-L-methionine. Phe-35 is a binding site for substrate. The residue at position 53 (Lys-53) is an N6-acetyllysine. S-adenosyl-L-methionine-binding positions include Leu-64, Glu-85, 129–130 (SI), and Arg-147.

The protein belongs to the class I-like SAM-binding methyltransferase superfamily. TPMT family. In terms of assembly, monomer.

It localises to the cytoplasm. The catalysed reaction is S-adenosyl-L-methionine + a thiopurine = S-adenosyl-L-homocysteine + a thiopurine S-methylether.. It carries out the reaction mercaptopurine + S-adenosyl-L-methionine = 6-methylthiopurine + S-adenosyl-L-homocysteine + H(+). Its function is as follows. Catalyzes the S-methylation of thiopurine drugs such as 6-mercaptopurine (also called mercaptopurine, 6-MP or its brand name Purinethol) using S-adenosyl-L-methionine as the methyl donor. TPMT activity modulates the cytotoxic effects of thiopurine prodrugs. A natural substrate for this enzyme has yet to be identified. The polypeptide is Thiopurine S-methyltransferase (Tpmt) (Rattus norvegicus (Rat)).